Consider the following 359-residue polypeptide: MENKKVIVGISGGVDSSVSALLLKQQGYDVTGVFMKNWEEDDTDEFCSAEQDIADAQAVCDSIGIPFKKINFTAEYWDNVFEHFLIEYKAGRTPNPDILCNKEIKFKAFLSYVHLLGGDYIATGHYAQTRLAADGSVQLVKGLDDNKDQTYFLYTLGQEQLRQTIFPIGNIEKSKVREIAKENNLVTFDKKDSTGICFIGERKFKEFLSKYLPAQKGEIHDENGIKIGMHDGLMYYTIGQRQGLGIGGVKDRPEVPWFAAKKDLENNVLIAVQGHDHPLLFKQSLQAIELSWVAGMAPADKFRCAAKVRYRQKDQSCEVEVNQDGSVNVTFDQPQRAITPGQSVVFYIDDVCLGGGVII.

Residues Gly9 to Ser16 and Met35 each bind ATP. Residues Asn95–Asp97 form an interaction with target base in tRNA region. Cys100 (nucleophile) is an active-site residue. Residues Cys100 and Cys197 are joined by a disulfide bond. Gly124 serves as a coordination point for ATP. The tract at residues Lys147–Gln149 is interaction with tRNA. Residue Cys197 is the Cysteine persulfide intermediate of the active site. An interaction with tRNA region spans residues Arg309 to Tyr310.

The protein belongs to the MnmA/TRMU family.

It is found in the cytoplasm. The catalysed reaction is S-sulfanyl-L-cysteinyl-[protein] + uridine(34) in tRNA + AH2 + ATP = 2-thiouridine(34) in tRNA + L-cysteinyl-[protein] + A + AMP + diphosphate + H(+). Functionally, catalyzes the 2-thiolation of uridine at the wobble position (U34) of tRNA, leading to the formation of s(2)U34. This chain is tRNA-specific 2-thiouridylase MnmA, found in Francisella tularensis subsp. holarctica (strain FTNF002-00 / FTA).